We begin with the raw amino-acid sequence, 160 residues long: Cytochrome b6-f complex subunit 4 (160 aa).

The next 3 membrane-spanning stretches (helical) occupy residues 36–56 (LLYI…GLSV), 95–115 (LLGV…PFIE), and 131–151 (TVFL…ALPI).

This sequence belongs to the cytochrome b family. PetD subfamily. As to quaternary structure, the 4 large subunits of the cytochrome b6-f complex are cytochrome b6, subunit IV (17 kDa polypeptide, petD), cytochrome f and the Rieske protein, while the 4 small subunits are petG, petL, petM and petN. The complex functions as a dimer.

It localises to the plastid. Its subcellular location is the chloroplast thylakoid membrane. In terms of biological role, component of the cytochrome b6-f complex, which mediates electron transfer between photosystem II (PSII) and photosystem I (PSI), cyclic electron flow around PSI, and state transitions. The chain is Cytochrome b6-f complex subunit 4 from Chlorella vulgaris (Green alga).